Here is an 832-residue protein sequence, read N- to C-terminus: Subtilisin-like protease SBT2.1 (832 aa).

The N-terminal stretch at 1 to 24 (MDESSLVRFVFLLCLVSSSVFCLA) is a signal peptide. The propeptide at 25 to 138 (ESDQNATVSS…VVLDFLVEKA (114 aa)) is activation peptide. N-linked (GlcNAc...) asparagine glycans are attached at residues asparagine 29 and asparagine 73. The Inhibitor I9 domain occupies 36–136 (VYIVTLKDRP…ENVVLDFLVE (101 aa)). In terms of domain architecture, Peptidase S8 spans 145-684 (FLGLPRGAWL…SGFVNATAAL (540 aa)). The active-site Charge relay system is the aspartate 172. Residue asparagine 233 is glycosylated (N-linked (GlcNAc...) asparagine). Histidine 247 functions as the Charge relay system in the catalytic mechanism. Asparagine 272, asparagine 315, asparagine 390, asparagine 417, asparagine 470, asparagine 515, and asparagine 522 each carry an N-linked (GlcNAc...) asparagine glycan. The 96-residue stretch at 408–503 (LVLATHALRN…MDIPGILISS (96 aa)) folds into the PA domain. Serine 609 acts as the Charge relay system in catalysis. N-linked (GlcNAc...) asparagine glycans are attached at residues asparagine 679, asparagine 705, asparagine 713, asparagine 723, asparagine 760, and asparagine 801.

The protein belongs to the peptidase S8 family.

The protein resides in the secreted. The protein is Subtilisin-like protease SBT2.1 of Arabidopsis thaliana (Mouse-ear cress).